A 484-amino-acid polypeptide reads, in one-letter code: Glycogen synthase 2 (484 aa).

Residue R15 coordinates ADP-alpha-D-glucose.

It belongs to the glycosyltransferase 1 family. Bacterial/plant glycogen synthase subfamily.

The enzyme catalyses [(1-&gt;4)-alpha-D-glucosyl](n) + ADP-alpha-D-glucose = [(1-&gt;4)-alpha-D-glucosyl](n+1) + ADP + H(+). The protein operates within glycan biosynthesis; glycogen biosynthesis. Its function is as follows. Synthesizes alpha-1,4-glucan chains using ADP-glucose. This chain is Glycogen synthase 2, found in Geobacter sulfurreducens (strain ATCC 51573 / DSM 12127 / PCA).